Consider the following 313-residue polypeptide: tRNA-cytidine(32) 2-sulfurtransferase (313 aa).

The PP-loop motif signature appears at 47–52 (SGGKDS). [4Fe-4S] cluster-binding residues include Cys122, Cys125, and Cys213.

The protein belongs to the TtcA family. In terms of assembly, homodimer. It depends on Mg(2+) as a cofactor. [4Fe-4S] cluster serves as cofactor.

The protein localises to the cytoplasm. It carries out the reaction cytidine(32) in tRNA + S-sulfanyl-L-cysteinyl-[cysteine desulfurase] + AH2 + ATP = 2-thiocytidine(32) in tRNA + L-cysteinyl-[cysteine desulfurase] + A + AMP + diphosphate + H(+). It participates in tRNA modification. Catalyzes the ATP-dependent 2-thiolation of cytidine in position 32 of tRNA, to form 2-thiocytidine (s(2)C32). The sulfur atoms are provided by the cysteine/cysteine desulfurase (IscS) system. The sequence is that of tRNA-cytidine(32) 2-sulfurtransferase from Yersinia pseudotuberculosis serotype IB (strain PB1/+).